A 760-amino-acid polypeptide reads, in one-letter code: Exostosin-1 (760 aa).

The Cytoplasmic portion of the chain corresponds to methionine 1 to arginine 6. A helical; Signal-anchor for type II membrane protein membrane pass occupies residues tyrosine 7–tyrosine 25. The Lumenal segment spans residues arginine 26–serine 760. N-linked (GlcNAc...) asparagine glycosylation is found at asparagine 71 and asparagine 327. Residue arginine 437 coordinates UDP-N-acetyl-alpha-D-glucosamine. N-linked (GlcNAc...) asparagine glycosylation is present at asparagine 476. A disordered region spans residues leucine 540–proline 560. A compositionally biased stretch (polar residues) spans glycine 541–proline 560. UDP-N-acetyl-alpha-D-glucosamine-binding residues include arginine 565, aspartate 581, glutamate 582, aspartate 583, glutamate 669, aspartate 670, and arginine 713. A Mn(2+)-binding site is contributed by aspartate 583. Cysteine 668 and cysteine 716 are joined by a disulfide. The active site involves aspartate 670.

Belongs to the glycosyltransferase 47 family. In terms of assembly, interacts with sau. The cofactor is Mn(2+). In terms of tissue distribution, ubiquitously expressed in early embryos. Later (in stage 10 embryos), it is expressed at higher level in the nervous system. Ubiquitously expressed in wing imaginal disk.

The protein localises to the endoplasmic reticulum membrane. Its subcellular location is the golgi apparatus membrane. The catalysed reaction is 3-O-{[(1-&gt;4)-beta-D-GlcA-(1-&gt;4)-alpha-D-GlcNAc](n)-(1-&gt;4)-beta-D-GlcA-(1-&gt;3)-beta-D-Gal-(1-&gt;3)-beta-D-Gal-(1-&gt;4)-beta-D-Xyl}-L-seryl-[protein] + UDP-N-acetyl-alpha-D-glucosamine = 3-O-{alpha-D-GlcNAc-[(1-&gt;4)-beta-D-GlcA-(1-&gt;4)-alpha-D-GlcNAc](n)-(1-&gt;4)-beta-D-GlcA-(1-&gt;3)-beta-D-Gal-(1-&gt;3)-beta-D-Gal-(1-&gt;4)-beta-D-Xyl}-L-seryl-[protein] + UDP + H(+). It carries out the reaction 3-O-{alpha-D-GlcNAc-[(1-&gt;4)-beta-D-GlcA-(1-&gt;4)-alpha-D-GlcNAc](n)-(1-&gt;4)-beta-D-GlcA-(1-&gt;3)-beta-D-Gal-(1-&gt;3)-beta-D-Gal-(1-&gt;4)-beta-D-Xyl}-L-seryl-[protein] + UDP-alpha-D-glucuronate = 3-O-{[(1-&gt;4)-beta-D-GlcA-(1-&gt;4)-alpha-D-GlcNAc](n+1)-(1-&gt;4)-beta-D-GlcA-(1-&gt;3)-beta-D-Gal-(1-&gt;3)-beta-D-Gal-(1-&gt;4)-beta-D-Xyl}-L-seryl-[protein] + UDP + H(+). It functions in the pathway protein modification; protein glycosylation. Its pathway is glycan metabolism; heparan sulfate biosynthesis. It participates in glycan metabolism; heparin biosynthesis. Glycosyltransferase required for the biosynthesis of heparan-sulfate and responsible for the alternating addition of beta-1-4-linked glucuronic acid (GlcA) and alpha-1-4-linked N-acetylglucosamine (GlcNAc) units to nascent heparan sulfate chains. Botv is the trigger of heparan sulfate chain initiation and polymerization takes place by a complex of ttv and sotv. Plays a central role in the diffusion of morphogens hedgehog (hh), wingless (wg) and decapentaplegic (dpp) via its role in heparan sulfate proteoglycans (HSPGs) biosynthesis which are required for movement of hh, dpp and wg morphogens. The polypeptide is Exostosin-1 (ttv) (Drosophila melanogaster (Fruit fly)).